The sequence spans 154 residues: Ribosomal RNA large subunit methyltransferase H (154 aa).

Residue glycine 102 participates in S-adenosyl-L-methionine binding.

It belongs to the RNA methyltransferase RlmH family. In terms of assembly, homodimer.

Its subcellular location is the cytoplasm. It carries out the reaction pseudouridine(1915) in 23S rRNA + S-adenosyl-L-methionine = N(3)-methylpseudouridine(1915) in 23S rRNA + S-adenosyl-L-homocysteine + H(+). Its function is as follows. Specifically methylates the pseudouridine at position 1915 (m3Psi1915) in 23S rRNA. This chain is Ribosomal RNA large subunit methyltransferase H, found in Phenylobacterium zucineum (strain HLK1).